We begin with the raw amino-acid sequence, 100 residues long: Putative septation protein SpoVG (100 aa).

It belongs to the SpoVG family.

Functionally, could be involved in septation. This chain is Putative septation protein SpoVG, found in Staphylococcus haemolyticus (strain JCSC1435).